The sequence spans 379 residues: Na(+)/H(+) antiporter NhaA (379 aa).

The next 12 membrane-spanning stretches (helical) occupy residues 14-34 (AGGI…NTPL), 59-79 (LLMW…GMEV), 95-115 (VFPA…FLVF), 125-145 (GWAI…ALLG), 154-174 (IFLL…IALF), 175-195 (FSHD…AILI), 200-220 (LKIT…ASVL), 221-241 (KSGV…PLNG), 261-281 (FAIL…GMGM), 292-312 (IALG…FVAV), 328-348 (IFAV…LAGL), and 359-379 (VTAL…VLGY).

The protein belongs to the NhaA Na(+)/H(+) (TC 2.A.33) antiporter family.

Its subcellular location is the cell inner membrane. It catalyses the reaction Na(+)(in) + 2 H(+)(out) = Na(+)(out) + 2 H(+)(in). Its function is as follows. Na(+)/H(+) antiporter that extrudes sodium in exchange for external protons. The protein is Na(+)/H(+) antiporter NhaA of Pasteurella multocida (strain Pm70).